Here is a 403-residue protein sequence, read N- to C-terminus: Propionate kinase (403 aa).

This sequence belongs to the acetokinase family. PduW subfamily.

Its subcellular location is the cytoplasm. The enzyme catalyses propanoate + ATP = propanoyl phosphate + ADP. It participates in polyol metabolism; 1,2-propanediol degradation. In terms of biological role, works with phosphate acetyltransferase (pta) to capture exogenous propionate and regenerate propionyl-CoA during degradation of 1,2-propanediol (1,2-PD). This Citrobacter rodentium (strain ICC168) (Citrobacter freundii biotype 4280) protein is Propionate kinase.